The chain runs to 211 residues: Ribonuclease HII (211 aa).

Residues Ser-21 to Ile-211 enclose the RNase H type-2 domain. A divalent metal cation contacts are provided by Asp-27, Glu-28, and Asp-122.

The protein belongs to the RNase HII family. Requires Mn(2+) as cofactor. Mg(2+) is required as a cofactor.

Its subcellular location is the cytoplasm. The catalysed reaction is Endonucleolytic cleavage to 5'-phosphomonoester.. Its function is as follows. Endonuclease that specifically degrades the RNA of RNA-DNA hybrids. The sequence is that of Ribonuclease HII from Dehalococcoides mccartyi (strain ATCC BAA-2266 / KCTC 15142 / 195) (Dehalococcoides ethenogenes (strain 195)).